A 638-amino-acid polypeptide reads, in one-letter code: DNA gyrase subunit B (638 aa).

Positions 431 to 545 (RELFIVEGNS…YGFVYIAQPP (115 aa)) constitute a Toprim domain. Mg(2+) is bound by residues Glu-437, Asp-510, and Asp-512.

Belongs to the type II topoisomerase GyrB family. Heterotetramer, composed of two GyrA and two GyrB chains. In the heterotetramer, GyrA contains the active site tyrosine that forms a transient covalent intermediate with DNA, while GyrB binds cofactors and catalyzes ATP hydrolysis. The cofactor is Mg(2+). It depends on Mn(2+) as a cofactor. Ca(2+) is required as a cofactor.

It is found in the cytoplasm. The catalysed reaction is ATP-dependent breakage, passage and rejoining of double-stranded DNA.. In terms of biological role, a type II topoisomerase that negatively supercoils closed circular double-stranded (ds) DNA in an ATP-dependent manner to modulate DNA topology and maintain chromosomes in an underwound state. Negative supercoiling favors strand separation, and DNA replication, transcription, recombination and repair, all of which involve strand separation. Also able to catalyze the interconversion of other topological isomers of dsDNA rings, including catenanes and knotted rings. Type II topoisomerases break and join 2 DNA strands simultaneously in an ATP-dependent manner. The chain is DNA gyrase subunit B from Metamycoplasma arthritidis (Mycoplasma arthritidis).